The following is a 55-amino-acid chain: uncharacterized protein (55 aa).

An N-terminal signal peptide occupies residues 1–19 (MQILLVVRLVLLWLGGLSA).

This is an uncharacterized protein from Orgyia pseudotsugata multicapsid polyhedrosis virus (OpMNPV).